The sequence spans 172 residues: Ribosome maturation factor RimM (172 aa).

One can recognise a PRC barrel domain in the interval Glu-97–Leu-170.

It belongs to the RimM family. Binds ribosomal protein uS19.

It is found in the cytoplasm. Its function is as follows. An accessory protein needed during the final step in the assembly of 30S ribosomal subunit, possibly for assembly of the head region. Essential for efficient processing of 16S rRNA. May be needed both before and after RbfA during the maturation of 16S rRNA. It has affinity for free ribosomal 30S subunits but not for 70S ribosomes. The polypeptide is Ribosome maturation factor RimM (Listeria monocytogenes serovar 1/2a (strain ATCC BAA-679 / EGD-e)).